The chain runs to 652 residues: p-hydroxybenzoic acid efflux pump subunit AaeB (652 aa).

The next 11 membrane-spanning stretches (helical) occupy residues 8–28, 34–54, 64–84, 88–108, 118–138, 149–169, 367–387, 404–424, 429–449, 453–473, and 480–500; these read FPIK…HFNL, AVMT…GDPF, LRII…IATI, ALMM…SSLI, LAGY…SVLL, EIII…PRSV, LFWL…LAVI, FLYG…VIMP, SMLL…ILIQ, IGTL…NPMT, and LDNA…ILLI.

It belongs to the aromatic acid exporter ArAE (TC 2.A.85) family.

The protein localises to the cell inner membrane. Forms an efflux pump with AaeA. Could function as a metabolic relief valve, allowing to eliminate certain compounds when they accumulate to high levels in the cell. The protein is p-hydroxybenzoic acid efflux pump subunit AaeB of Erwinia billingiae (strain Eb661).